The primary structure comprises 161 residues: Nucleotide-binding protein Pnec_0318 (161 aa).

This sequence belongs to the YajQ family.

Functionally, nucleotide-binding protein. This chain is Nucleotide-binding protein Pnec_0318, found in Polynucleobacter necessarius subsp. necessarius (strain STIR1).